We begin with the raw amino-acid sequence, 83 residues long: Protein CASPARIAN STRIP INTEGRITY FACTOR 2 (83 aa).

The first 28 residues, 1 to 28 (MGLLPLVKKLGFIIFLLVSASAFALCSA), serve as a signal peptide directing secretion. The interval 61-83 (SRDYGHSSPKPKLVRPPFKLIPN) is disordered. Sulfotyrosine is present on Y64. 2 positions are modified to hydroxyproline: P69 and P71.

Interacts with the specific receptor kinases GSO1 and GSO2. Expressed exclusively in the root stele.

Peptide hormone required for contiguous Casparian strip diffusion barrier formation in roots via the regulation of CASPs protein expression and distribution in a GSO1-GSO2 signaling pathway. The Casparian strip is required for ion homeostasis (e.g. iron and potassium ions). In Arabidopsis thaliana (Mouse-ear cress), this protein is Protein CASPARIAN STRIP INTEGRITY FACTOR 2.